The chain runs to 776 residues: 5-methyltetrahydropteroyltriglutamate--homocysteine methyltransferase (776 aa).

5-methyltetrahydropteroyltri-L-glutamate is bound by residues 13-16 (RELK) and Lys-127. L-homocysteine is bound by residues 450–452 (IGS) and Glu-503. Residues 450–452 (IGS) and Glu-503 contribute to the L-methionine site. 5-methyltetrahydropteroyltri-L-glutamate is bound at residue Trp-580. Residue Asp-618 coordinates L-homocysteine. Asp-618 contacts L-methionine. Position 624 (Glu-624) interacts with 5-methyltetrahydropteroyltri-L-glutamate. Residues His-660, Cys-662, and Glu-684 each contribute to the Zn(2+) site. Residue His-713 is the Proton donor of the active site. Cys-745 serves as a coordination point for Zn(2+).

The protein belongs to the vitamin-B12 independent methionine synthase family. Zn(2+) serves as cofactor.

It catalyses the reaction 5-methyltetrahydropteroyltri-L-glutamate + L-homocysteine = tetrahydropteroyltri-L-glutamate + L-methionine. It participates in amino-acid biosynthesis; L-methionine biosynthesis via de novo pathway; L-methionine from L-homocysteine (MetE route): step 1/1. Its function is as follows. Catalyzes the transfer of a methyl group from 5-methyltetrahydrofolate to homocysteine resulting in methionine formation. The sequence is that of 5-methyltetrahydropteroyltriglutamate--homocysteine methyltransferase from Mesorhizobium japonicum (strain LMG 29417 / CECT 9101 / MAFF 303099) (Mesorhizobium loti (strain MAFF 303099)).